We begin with the raw amino-acid sequence, 181 residues long: Oligoribonuclease (181 aa).

The region spanning 8 to 171 (LIWIDLEMTG…DDIRESVAEL (164 aa)) is the Exonuclease domain. Tyrosine 129 is a catalytic residue.

It belongs to the oligoribonuclease family.

Its subcellular location is the cytoplasm. In terms of biological role, 3'-to-5' exoribonuclease specific for small oligoribonucleotides. This Photorhabdus laumondii subsp. laumondii (strain DSM 15139 / CIP 105565 / TT01) (Photorhabdus luminescens subsp. laumondii) protein is Oligoribonuclease.